Consider the following 201-residue polypeptide: uncharacterized protein (201 aa).

Residues 64-78 are compositionally biased toward acidic residues; the sequence is DNEIKEEEESEEEEK. Disordered regions lie at residues 64–114 and 182–201; these read DNEI…FKNA and ILPGGCTGNTETVDQGLSKQ. The segment covering 96–106 has biased composition (basic residues); it reads RNKHGRNRNPR. Polar residues predominate over residues 189-201; that stretch reads GNTETVDQGLSKQ.

This is an uncharacterized protein from Ostreid herpesvirus 1 (isolate France) (OsHV-1).